Consider the following 216-residue polypeptide: Small ribosomal subunit protein uS3 (216 aa).

The region spanning 38-106 is the KH type-2 domain; that stretch reads LRKMLKDKLY…QANIEIKEVR (69 aa).

Belongs to the universal ribosomal protein uS3 family. As to quaternary structure, part of the 30S ribosomal subunit. Forms a tight complex with proteins S10 and S14.

Binds the lower part of the 30S subunit head. Binds mRNA in the 70S ribosome, positioning it for translation. The protein is Small ribosomal subunit protein uS3 of Thermodesulfovibrio yellowstonii (strain ATCC 51303 / DSM 11347 / YP87).